A 944-amino-acid chain; its full sequence is Nonsense-mediated mRNA decay factor SMG8 (944 aa).

2 disordered regions span residues Asn-560–Ala-597 and Gln-628–Asn-653. The span at Gln-568–Gln-583 shows a compositional bias: acidic residues. Polar residues predominate over residues Gln-628–Asp-650.

Belongs to the SMG8 family.

In terms of biological role, involved in nonsense-mediated decay (NMD) of mRNAs containing premature stop codons. Probable component of kinase complex containing nonC and recruited to stalled ribosomes. This is Nonsense-mediated mRNA decay factor SMG8 from Drosophila simulans (Fruit fly).